The chain runs to 552 residues: Membrane protein insertase YidC (552 aa).

The next 5 membrane-spanning stretches (helical) occupy residues Val7–Gln24, Trp364–Ala384, Leu434–Val454, Pro473–Pro493, and Pro508–Val528.

This sequence belongs to the OXA1/ALB3/YidC family. Type 1 subfamily. In terms of assembly, interacts with the Sec translocase complex via SecD. Specifically interacts with transmembrane segments of nascent integral membrane proteins during membrane integration.

It is found in the cell inner membrane. In terms of biological role, required for the insertion and/or proper folding and/or complex formation of integral membrane proteins into the membrane. Involved in integration of membrane proteins that insert both dependently and independently of the Sec translocase complex, as well as at least some lipoproteins. Aids folding of multispanning membrane proteins. In Burkholderia cenocepacia (strain HI2424), this protein is Membrane protein insertase YidC.